The following is a 340-amino-acid chain: Probable peroxidase 61 (340 aa).

An N-terminal signal peptide occupies residues 1–25 (MQFVNFFPLLALVVISLAGKATVEA). 4 cysteine pairs are disulfide-bonded: cysteine 46-cysteine 122, cysteine 79-cysteine 84, cysteine 128-cysteine 331, and cysteine 205-cysteine 237. Asparagine 63 carries N-linked (GlcNAc...) asparagine glycosylation. Residue arginine 73 is part of the active site. Aspartate 78, valine 81, glycine 83, aspartate 85, and serine 87 together coordinate Ca(2+). Residue proline 168 participates in substrate binding. Histidine 198 lines the heme b pocket. Serine 199 provides a ligand contact to Ca(2+). N-linked (GlcNAc...) asparagine glycosylation is present at asparagine 226. Residues aspartate 255 and serine 258 each contribute to the Ca(2+) site.

It belongs to the peroxidase family. Classical plant (class III) peroxidase subfamily. Requires heme b as cofactor. Ca(2+) is required as a cofactor.

It localises to the secreted. The catalysed reaction is 2 a phenolic donor + H2O2 = 2 a phenolic radical donor + 2 H2O. Functionally, removal of H(2)O(2), oxidation of toxic reductants, biosynthesis and degradation of lignin, suberization, auxin catabolism, response to environmental stresses such as wounding, pathogen attack and oxidative stress. The enzyme activity has to be proved. In Arabidopsis thaliana (Mouse-ear cress), this protein is Probable peroxidase 61 (PER61).